The primary structure comprises 492 residues: Ethanolamine-phosphate phospho-lyase (492 aa).

An N6-(pyridoxal phosphate)lysine modification is found at Lys280. The disordered stretch occupies residues 462-492 (ASDENGLVHPSNGNSHKHTSTIPLSKKTKRN).

The protein belongs to the class-III pyridoxal-phosphate-dependent aminotransferase family. In terms of assembly, homotetramer. The cofactor is pyridoxal 5'-phosphate.

It is found in the mitochondrion. The catalysed reaction is phosphoethanolamine + H2O = acetaldehyde + NH4(+) + phosphate. Catalyzes the pyridoxal-phosphate-dependent breakdown of phosphoethanolamine, converting it to ammonia, inorganic phosphate and acetaldehyde. This Danio rerio (Zebrafish) protein is Ethanolamine-phosphate phospho-lyase (etnppl).